Reading from the N-terminus, the 504-residue chain is Histidine--tRNA ligase (504 aa).

This sequence belongs to the class-II aminoacyl-tRNA synthetase family. In terms of assembly, homodimer.

The protein localises to the cytoplasm. The enzyme catalyses tRNA(His) + L-histidine + ATP = L-histidyl-tRNA(His) + AMP + diphosphate + H(+). This Rhizobium rhizogenes (strain K84 / ATCC BAA-868) (Agrobacterium radiobacter) protein is Histidine--tRNA ligase.